The sequence spans 632 residues: Chaperone protein HtpG (632 aa).

The tract at residues 1–339 is a; substrate-binding; sequence MTQQTMSFQA…SSDLPLNVSR (339 aa). The interval 340–559 is b; the sequence is EILQESRDVK…DNDMSGYLQR (220 aa). Positions 560 to 632 are c; the sequence is MLKAAGQSAP…TNALLLSRAA (73 aa).

It belongs to the heat shock protein 90 family. In terms of assembly, homodimer.

The protein localises to the cytoplasm. In terms of biological role, molecular chaperone. Has ATPase activity. The chain is Chaperone protein HtpG from Burkholderia mallei (strain NCTC 10247).